Here is a 431-residue protein sequence, read N- to C-terminus: Histidinol dehydrogenase (431 aa).

NAD(+)-binding residues include Y127, Q185, and N208. Substrate is bound by residues S234, Q256, and H259. Residues Q256 and H259 each contribute to the Zn(2+) site. Residues E323 and H324 each act as proton acceptor in the active site. Substrate contacts are provided by H324, D357, E411, and H416. Position 357 (D357) interacts with Zn(2+). Zn(2+) is bound at residue H416.

It belongs to the histidinol dehydrogenase family. The cofactor is Zn(2+).

It carries out the reaction L-histidinol + 2 NAD(+) + H2O = L-histidine + 2 NADH + 3 H(+). It participates in amino-acid biosynthesis; L-histidine biosynthesis; L-histidine from 5-phospho-alpha-D-ribose 1-diphosphate: step 9/9. Catalyzes the sequential NAD-dependent oxidations of L-histidinol to L-histidinaldehyde and then to L-histidine. In Vibrio cholerae serotype O1 (strain ATCC 39315 / El Tor Inaba N16961), this protein is Histidinol dehydrogenase.